The chain runs to 464 residues: Cysteine--tRNA ligase (464 aa).

Zn(2+) is bound at residue Cys-28. The short motif at 30 to 40 (VTVYDFCHIGH) is the 'HIGH' region element. Residues Cys-209, His-234, and Glu-238 each contribute to the Zn(2+) site. Positions 266 to 270 (KMSKS) match the 'KMSKS' region motif. Lys-269 is a binding site for ATP.

This sequence belongs to the class-I aminoacyl-tRNA synthetase family. Monomer. The cofactor is Zn(2+).

The protein localises to the cytoplasm. The enzyme catalyses tRNA(Cys) + L-cysteine + ATP = L-cysteinyl-tRNA(Cys) + AMP + diphosphate. The protein is Cysteine--tRNA ligase (cysS) of Buchnera aphidicola subsp. Acyrthosiphon pisum (strain APS) (Acyrthosiphon pisum symbiotic bacterium).